The chain runs to 156 residues: Ribosomal RNA large subunit methyltransferase H (156 aa).

S-adenosyl-L-methionine contacts are provided by residues Gly104 and 123–128 (LSALTL).

The protein belongs to the RNA methyltransferase RlmH family. As to quaternary structure, homodimer.

It is found in the cytoplasm. The catalysed reaction is pseudouridine(1915) in 23S rRNA + S-adenosyl-L-methionine = N(3)-methylpseudouridine(1915) in 23S rRNA + S-adenosyl-L-homocysteine + H(+). In terms of biological role, specifically methylates the pseudouridine at position 1915 (m3Psi1915) in 23S rRNA. This Nitrosospira multiformis (strain ATCC 25196 / NCIMB 11849 / C 71) protein is Ribosomal RNA large subunit methyltransferase H.